A 349-amino-acid chain; its full sequence is Farnesyl pyrophosphate synthase (349 aa).

Isopentenyl diphosphate contacts are provided by Lys-48, Arg-51, and Gln-90. 2 residues coordinate Mg(2+): Asp-97 and Asp-101. Residue Arg-106 participates in dimethylallyl diphosphate binding. Arg-107 is an isopentenyl diphosphate binding site. Residues Lys-194, Thr-195, Gln-234, Lys-251, and Lys-260 each contribute to the dimethylallyl diphosphate site.

This sequence belongs to the FPP/GGPP synthase family. Requires Mg(2+) as cofactor.

The protein localises to the cytoplasm. It carries out the reaction isopentenyl diphosphate + dimethylallyl diphosphate = (2E)-geranyl diphosphate + diphosphate. The enzyme catalyses isopentenyl diphosphate + (2E)-geranyl diphosphate = (2E,6E)-farnesyl diphosphate + diphosphate. The protein operates within isoprenoid biosynthesis; farnesyl diphosphate biosynthesis; farnesyl diphosphate from geranyl diphosphate and isopentenyl diphosphate: step 1/1. It participates in isoprenoid biosynthesis; geranyl diphosphate biosynthesis; geranyl diphosphate from dimethylallyl diphosphate and isopentenyl diphosphate: step 1/1. Functionally, catalyzes the sequential condensation of isopentenyl pyrophosphate with the allylic pyrophosphates, dimethylallyl pyrophosphate, and then with the resultant geranylpyrophosphate to the ultimate product farnesyl pyrophosphate. The protein is Farnesyl pyrophosphate synthase (FPS1) of Kluyveromyces lactis (strain ATCC 8585 / CBS 2359 / DSM 70799 / NBRC 1267 / NRRL Y-1140 / WM37) (Yeast).